A 343-amino-acid polypeptide reads, in one-letter code: Heme A synthase (343 aa).

A run of 8 helical transmembrane segments spans residues 13–33 (VAIW…VGGA), 96–116 (HRLL…VFLI), 130–150 (AMLG…SSGL), 161–181 (LMTH…TALD), 197–217 (GWAL…ALVA), 258–278 (FNHR…VVLA), 294–314 (AVAA…MAAV), and 318–338 (LGVL…AFAW). Histidine 260 provides a ligand contact to heme. Heme is bound at residue histidine 322.

This sequence belongs to the COX15/CtaA family. Type 2 subfamily. Interacts with CtaB. Requires heme b as cofactor.

The protein resides in the cell membrane. The enzyme catalyses Fe(II)-heme o + 2 A + H2O = Fe(II)-heme a + 2 AH2. Its pathway is porphyrin-containing compound metabolism; heme A biosynthesis; heme A from heme O: step 1/1. Its function is as follows. Catalyzes the conversion of heme O to heme A by two successive hydroxylations of the methyl group at C8. The first hydroxylation forms heme I, the second hydroxylation results in an unstable dihydroxymethyl group, which spontaneously dehydrates, resulting in the formyl group of heme A. This is Heme A synthase from Caulobacter vibrioides (strain ATCC 19089 / CIP 103742 / CB 15) (Caulobacter crescentus).